Consider the following 549-residue polypeptide: CTP synthase (549 aa).

Residues M1–L270 form an amidoligase domain region. S13 contributes to the CTP binding site. Residue S13 participates in UTP binding. ATP-binding positions include S14–I19 and D71. Mg(2+) contacts are provided by D71 and E144. CTP is bound by residues D151 to E153, K191 to Q196, and K227. UTP contacts are provided by residues K191–Q196 and K227. Positions T295 to Q547 constitute a Glutamine amidotransferase type-1 domain. G356 serves as a coordination point for L-glutamine. Catalysis depends on C383, which acts as the Nucleophile; for glutamine hydrolysis. L-glutamine contacts are provided by residues L384–Q387, E407, and R473. Residues H520 and E522 contribute to the active site.

This sequence belongs to the CTP synthase family. Homotetramer.

The enzyme catalyses UTP + L-glutamine + ATP + H2O = CTP + L-glutamate + ADP + phosphate + 2 H(+). The catalysed reaction is L-glutamine + H2O = L-glutamate + NH4(+). It carries out the reaction UTP + NH4(+) + ATP = CTP + ADP + phosphate + 2 H(+). The protein operates within pyrimidine metabolism; CTP biosynthesis via de novo pathway; CTP from UDP: step 2/2. Allosterically activated by GTP, when glutamine is the substrate; GTP has no effect on the reaction when ammonia is the substrate. The allosteric effector GTP functions by stabilizing the protein conformation that binds the tetrahedral intermediate(s) formed during glutamine hydrolysis. Inhibited by the product CTP, via allosteric rather than competitive inhibition. Catalyzes the ATP-dependent amination of UTP to CTP with either L-glutamine or ammonia as the source of nitrogen. Regulates intracellular CTP levels through interactions with the four ribonucleotide triphosphates. This Cupriavidus metallidurans (strain ATCC 43123 / DSM 2839 / NBRC 102507 / CH34) (Ralstonia metallidurans) protein is CTP synthase.